Here is a 153-residue protein sequence, read N- to C-terminus: ORM1-like protein 3 (153 aa).

The interval 1–17 (MNVGTAHSEVNPNTRVM) is important for ceramide level-sensing. Residues 1–21 (MNVGTAHSEVNPNTRVMNSRG) lie on the Cytoplasmic side of the membrane. A run of 2 helical transmembrane segments spans residues 22–42 (IWLSYVLAIGLLHVVLLSIPF) and 43–63 (VSVPVVWTLTNLIHNTGMYIF). The Cytoplasmic portion of the chain corresponds to 64–94 (LHTVKGTPFETPDQGKARLLTHWEQMDYGVQ). Residues 95-117 (FTASRKFLTITPIVLYFLTSFYT) traverse the membrane as a helical segment. Topologically, residues 118–121 (KYDQ) are extracellular. A helical membrane pass occupies residues 122 to 142 (IHFVLNTVSLMSVLIPKLPQL). Hydroxyproline is present on P137. The Cytoplasmic portion of the chain corresponds to 143-153 (HGVRIFGINKY).

It belongs to the ORM family. As to quaternary structure, ceramide-sensitive subunit of the serine palmitoyltransferase (SPT) complex, which is also composed of SPTLC1, SPTLC2/3 and SPTSSA/B. In terms of processing, when hydroxylated at Pro-137, ubiquitinated via 'Lys-48'-linkage, leading to proteasomal degradation. In endothelial cells, ORMDL3 proteasomal degradation is controlled by the sphingosine 1-phosphate receptor signaling pathway.

It is found in the endoplasmic reticulum membrane. Functionally, plays an essential role in the homeostatic regulation of sphingolipid de novo biosynthesis by modulating the activity of the serine palmitoyltransferase (SPT) in response to ceramide levels. When complexed to SPT, the binding of ceramides to its N-terminus stabilizes a conformation that block SPT substrate entry, hence preventing SPT catalytic activity. Through this mechanism, maintains ceramide levels at sufficient concentrations for the production of complex sphingolipids, but which prevents the accumulation of ceramides to levels that trigger apoptosis. This chain is ORM1-like protein 3 (ORMDL3), found in Ailuropoda melanoleuca (Giant panda).